The primary structure comprises 344 residues: Ketol-acid reductoisomerase (NADP(+)) (344 aa).

Residues E2–T181 form the KARI N-terminal Rossmann domain. Residues Y25 to Q28, R48, S52, and D82 to Q85 contribute to the NADP(+) site. Residue H107 is part of the active site. NADP(+) is bound at residue G133. One can recognise a KARI C-terminal knotted domain in the interval T182 to I327. Residues D190, E194, E226, and E230 each contribute to the Mg(2+) site. A substrate-binding site is contributed by S251.

Belongs to the ketol-acid reductoisomerase family. Mg(2+) serves as cofactor.

The catalysed reaction is (2R)-2,3-dihydroxy-3-methylbutanoate + NADP(+) = (2S)-2-acetolactate + NADPH + H(+). It carries out the reaction (2R,3R)-2,3-dihydroxy-3-methylpentanoate + NADP(+) = (S)-2-ethyl-2-hydroxy-3-oxobutanoate + NADPH + H(+). Its pathway is amino-acid biosynthesis; L-isoleucine biosynthesis; L-isoleucine from 2-oxobutanoate: step 2/4. It functions in the pathway amino-acid biosynthesis; L-valine biosynthesis; L-valine from pyruvate: step 2/4. Involved in the biosynthesis of branched-chain amino acids (BCAA). Catalyzes an alkyl-migration followed by a ketol-acid reduction of (S)-2-acetolactate (S2AL) to yield (R)-2,3-dihydroxy-isovalerate. In the isomerase reaction, S2AL is rearranged via a Mg-dependent methyl migration to produce 3-hydroxy-3-methyl-2-ketobutyrate (HMKB). In the reductase reaction, this 2-ketoacid undergoes a metal-dependent reduction by NADPH to yield (R)-2,3-dihydroxy-isovalerate. This Alicyclobacillus acidocaldarius subsp. acidocaldarius (strain ATCC 27009 / DSM 446 / BCRC 14685 / JCM 5260 / KCTC 1825 / NBRC 15652 / NCIMB 11725 / NRRL B-14509 / 104-IA) (Bacillus acidocaldarius) protein is Ketol-acid reductoisomerase (NADP(+)).